Here is a 786-residue protein sequence, read N- to C-terminus: Protein SEY1 (786 aa).

The Cytoplasmic portion of the chain corresponds to 1–684 (MSDLKEAIQL…KRSIVNTTER (684 aa)). Residues 35 to 262 (GVKYHVISVF…QDASFFKDEY (228 aa)) form the GB1/RHD3-type G domain. 45–52 (GSQSSGKS) serves as a coordination point for GTP. A coiled-coil region spans residues 355-375 (KKVYEERRDDLIKQLNTIIDE). Residues 685–705 (IPLYMYALVVALGWGRIITIL) traverse the membrane as a helical segment. Topologically, residues 706 to 708 (RNP) are lumenal. A helical transmembrane segment spans residues 709-729 (ATIILSIIVLAGAYFVHKLNL). The Cytoplasmic portion of the chain corresponds to 730–786 (WGPLLQFANQATGQATAVLKQTVRSLVVDEEPKRKILVEPHESEGVDKEPSKNDQHL). The interval 765–786 (ILVEPHESEGVDKEPSKNDQHL) is disordered.

It belongs to the TRAFAC class dynamin-like GTPase superfamily. GB1/RHD3 GTPase family. RHD3 subfamily.

The protein resides in the endoplasmic reticulum membrane. In terms of biological role, cooperates with the reticulon proteins and tubule-shaping DP1 family proteins to generate and maintain the structure of the tubular endoplasmic reticulum network. Has GTPase activity, which is required for its function in ER organization. This chain is Protein SEY1, found in Kluyveromyces lactis (strain ATCC 8585 / CBS 2359 / DSM 70799 / NBRC 1267 / NRRL Y-1140 / WM37) (Yeast).